A 198-amino-acid chain; its full sequence is Probable GTP-binding protein EngB (198 aa).

Residues 22–197 enclose the EngB-type G domain; the sequence is TLPEYAFIGR…LDYIEGINNS (176 aa). GTP is bound by residues 30–37, 57–61, 75–78, 142–145, and 175–178; these read GRSNVGKS, GKTQL, DLPG, TKAD, and ITSA. 2 residues coordinate Mg(2+): serine 37 and threonine 59.

Belongs to the TRAFAC class TrmE-Era-EngA-EngB-Septin-like GTPase superfamily. EngB GTPase family. Mg(2+) serves as cofactor.

Functionally, necessary for normal cell division and for the maintenance of normal septation. This chain is Probable GTP-binding protein EngB, found in Christiangramia forsetii (strain DSM 17595 / CGMCC 1.15422 / KT0803) (Gramella forsetii).